The sequence spans 88 residues: Small ribosomal subunit protein bS20 (88 aa).

The disordered stretch occupies residues 1–23; the sequence is MANSPQAKKRARQNDKARAHNAS.

Belongs to the bacterial ribosomal protein bS20 family.

In terms of biological role, binds directly to 16S ribosomal RNA. The polypeptide is Small ribosomal subunit protein bS20 (Saccharophagus degradans (strain 2-40 / ATCC 43961 / DSM 17024)).